The chain runs to 107 residues: Large ribosomal subunit protein eL21 (107 aa).

The protein belongs to the eukaryotic ribosomal protein eL21 family.

The sequence is that of Large ribosomal subunit protein eL21 (rpl21e) from Aeropyrum pernix (strain ATCC 700893 / DSM 11879 / JCM 9820 / NBRC 100138 / K1).